The following is a 362-amino-acid chain: Leucoanthocyanidin dioxygenase (362 aa).

Residues 1-23 form a disordered region; sequence MVTSAMGPSPRVEELARSGLDTI. Positions 214-313 constitute a Fe2OG dioxygenase domain; the sequence is LIVQMKINFY…RISWAVFCEP (100 aa). Positions 238, 240, and 294 each coordinate Fe cation. Arg304 is a catalytic residue.

This sequence belongs to the iron/ascorbate-dependent oxidoreductase family. Fe cation is required as a cofactor. The cofactor is L-ascorbate. In terms of tissue distribution, expressed in red but not in green forma of P.frutescens. In red forma, it is predominantly expressed in stems and leaves, but not in roots.

The catalysed reaction is a (2R,3S,4S)-leucoanthocyanidin + 2-oxoglutarate + O2 = a 4-H-anthocyanidin with a 3-hydroxy group + succinate + CO2 + 2 H2O. Its pathway is pigment biosynthesis; anthocyanin biosynthesis. Functionally, oxidation of leucoanthocyanidins into anthocyanidins. In Perilla frutescens (Beefsteak mint), this protein is Leucoanthocyanidin dioxygenase (ANS).